The following is a 103-amino-acid chain: Nucleoid-associated protein NIS_0256 (103 aa).

Belongs to the YbaB/EbfC family. In terms of assembly, homodimer.

The protein resides in the cytoplasm. Its subcellular location is the nucleoid. In terms of biological role, binds to DNA and alters its conformation. May be involved in regulation of gene expression, nucleoid organization and DNA protection. The protein is Nucleoid-associated protein NIS_0256 of Nitratiruptor sp. (strain SB155-2).